Consider the following 406-residue polypeptide: Cholinephosphotransferase 1 (406 aa).

The residue at position 2 (Ala2) is an N-acetylalanine. The Cytoplasmic portion of the chain corresponds to 2–62 (AAGAGARPAP…LLQWIPLWMA (61 aa)). Residues 63 to 83 (PNSITLLGLAINMLTTLVLIS) traverse the membrane as a helical segment. Asn64 provides a ligand contact to CDP-choline. At 84–93 (YCPTVTEEAP) the chain is on the lumenal side. Residues 94 to 118 (YWTYLLCALGLFIYQSLDAIDGKQA) form a helical membrane-spanning segment. Mg(2+) is bound by residues Asp111 and Asp114. Arg119 is a CDP-choline binding site. The Cytoplasmic portion of the chain corresponds to 119 to 125 (RRTNSCS). The chain crosses the membrane as a helical span at residues 126–150 (PLGELFDHGCDSLSTVFMAVGASIA). Asp132 contributes to the Mg(2+) binding site. The Proton acceptor role is filled by His133. Asp136 lines the Mg(2+) pocket. Topologically, residues 151–160 (VRLGTHPDWL) are lumenal. A helical membrane pass occupies residues 161-179 (FFCSFIGMFMFYCAHWQTY). Over 180–190 (VSGVLRFGKVD) the chain is Cytoplasmic. Residues 191–207 (VTEIQIALVIVFVLSTF) form a helical membrane-spanning segment. At 208–222 (GGATMWDYTIPILEI) the chain is on the lumenal side. Residues 223–248 (KLKILPVLGVVGGAIFSCSNYFHVIL) traverse the membrane as a helical segment. Topologically, residues 249–265 (HGGVGKNGSTIAGTSVL) are cytoplasmic. A helical transmembrane segment spans residues 266-281 (SPGLHIGIIIILAIMI). At 282 to 293 (YKKSATNLFEKH) the chain is on the lumenal side. Residues 294 to 316 (PCLYTLMFGCVFAKVSQKLVIAH) form a helical membrane-spanning segment. Residues 317 to 329 (MTKSELYLQDTVF) are Cytoplasmic-facing. Residues 330 to 339 (IGPGLLFLDQ) traverse the membrane as a helical segment. Residues 340-346 (YFNNFVD) lie on the Lumenal side of the membrane. Residues 347–376 (EYIVLWIAMVISSLDMMRYFSALCLQISRH) traverse the membrane as a helical segment. At 377-406 (LHLSIFKTSCHQAPEQVQVLPPKSHQNNMD) the chain is on the cytoplasmic side.

This sequence belongs to the CDP-alcohol phosphatidyltransferase class-I family. The cofactor is Mg(2+). It depends on Mn(2+) as a cofactor.

The protein resides in the golgi apparatus membrane. It carries out the reaction CDP-choline + a 1,2-diacyl-sn-glycerol = a 1,2-diacyl-sn-glycero-3-phosphocholine + CMP + H(+). The enzyme catalyses 1-octadecanoyl-2-(5Z,8Z,11Z,14Z-eicosatetraenoyl)-sn-glycerol + CDP-choline = 1-octadecanoyl-2-(5Z,8Z,11Z,14Z-eicosatetraenoyl)-sn-glycero-3-phosphocholine + CMP + H(+). The catalysed reaction is 1-hexadecanoyl-2-(9Z-octadecenoyl)-sn-glycerol + CDP-choline = 1-hexadecanoyl-2-(9Z-octadecenoyl)-sn-glycero-3-phosphocholine + CMP + H(+). It catalyses the reaction 1-hexadecanoyl-2-(4Z,7Z,10Z,13Z,16Z,19Z-docosahexaenoyl)-sn-glycerol + CDP-choline = 1-hexadecanoyl-2-(4Z,7Z,10Z,13Z,16Z,19Z-docosahexaenoyl)-sn-glycero-3-phosphocholine + CMP + H(+). It carries out the reaction 1,2-dioctanoyl-sn-glycerol + CDP-choline = 1,2-dioctanoyl-sn-glycero-3-phosphocholine + CMP + H(+). It participates in phospholipid metabolism; phosphatidylcholine biosynthesis; phosphatidylcholine from phosphocholine: step 2/2. In terms of biological role, catalyzes the final step of de novo phosphatidylcholine (PC) synthesis, i.e. the transfer of choline phosphate from CDP-choline to the free hydroxyl of a diacylglycerol (DAG), producing a PC. It thereby plays a central role in the formation and maintenance of vesicular membranes. The chain is Cholinephosphotransferase 1 (CHPT1) from Bos taurus (Bovine).